Here is a 1069-residue protein sequence, read N- to C-terminus: Cellulose synthase A catalytic subunit 5 [UDP-forming] (1069 aa).

Met-1 is subject to N-acetylmethionine. The Cytoplasmic portion of the chain corresponds to 1 to 265 (MNTGGRLIAG…KSSKINPYRM (265 aa)). Zn(2+) contacts are provided by Cys-39, Cys-42, Cys-58, Cys-61, Cys-66, Cys-69, Cys-81, and Cys-84. The RING-type; degenerate zinc-finger motif lies at 39-85 (CQICGDEIELSVDGESFVACNECAFPVCRPCYEYERREGNQSCPQCK). Phosphoserine occurs at positions 229 and 230. The chain crosses the membrane as a helical span at residues 266–286 (LIVLRLVILGLFFHYRILHPV). Residues 287–288 (ND) lie on the Extracellular side of the membrane. The helical transmembrane segment at 289 to 309 (AYALWLISVICEIWFAVSWVL) threads the bilayer. Residues 310 to 853 (DQFPKWYPIE…INSVVYPWTS (544 aa)) lie on the Cytoplasmic side of the membrane. 4 residues coordinate UDP-alpha-D-glucose: Ser-348, Lys-354, Glu-355, and Asp-384. Asp-384 is a catalytic residue. The stretch at 438 to 464 (VRERRAMKRDYEEFKVKINALVATAQK) forms a coiled coil. Lys-525 contributes to the UDP-alpha-D-glucose binding site. Mn(2+) is bound by residues Lys-526 and Asp-550. Asp-770 is an active-site residue. Residues 854–874 (IPLLVYCSLPAICLLTGKFIV) form a helical membrane-spanning segment. Topologically, residues 875-879 (PEISN) are extracellular. The chain crosses the membrane as a helical span at residues 880–900 (YASILFMALFGSIAVTGILEM). The Cytoplasmic portion of the chain corresponds to 901 to 915 (QWGKVGIDDWWRNEQ). A helical transmembrane segment spans residues 916-936 (FWVIGGVSAHLFALFQGLLKV). Topologically, residues 937 to 965 (LAGVETNFTVTSKAADDGEFSELYIFKWT) are extracellular. A glycan (N-linked (GlcNAc...) asparagine) is linked at Asn-943. The chain crosses the membrane as a helical span at residues 966-986 (SLLIPPTTLLIINVIGVIVGI). At 987–997 (SDAISNGYDSW) the chain is on the cytoplasmic side. A helical membrane pass occupies residues 998-1018 (GPLFGRLFFAFWVILHLYPFL). Topologically, residues 1019-1027 (KGLLGKQDR) are extracellular. Residues 1028–1048 (MPTIILVWSILLASILTLLWV) form a helical membrane-spanning segment. The Cytoplasmic segment spans residues 1049 to 1069 (RVNPFVAKGGPILEICGLDCL).

This sequence belongs to the glycosyltransferase 2 family. Plant cellulose synthase subfamily. Zn(2+) serves as cofactor. It depends on Mn(2+) as a cofactor. In terms of tissue distribution, expressed in young plants, stems and flowers.

The protein resides in the cell membrane. It catalyses the reaction [(1-&gt;4)-beta-D-glucosyl](n) + UDP-alpha-D-glucose = [(1-&gt;4)-beta-D-glucosyl](n+1) + UDP + H(+). The protein operates within glycan metabolism; plant cellulose biosynthesis. Catalytic subunit of cellulose synthase terminal complexes ('rosettes'), required for beta-1,4-glucan microfibril crystallization, a major mechanism of the cell wall formation. This chain is Cellulose synthase A catalytic subunit 5 [UDP-forming], found in Arabidopsis thaliana (Mouse-ear cress).